Reading from the N-terminus, the 260-residue chain is Large ribosomal subunit protein uL30 (260 aa).

Met-1 bears the N-acetylmethionine mark. 5 repeat units span residues 7–18 (KKKKVAAALGTL), 19–30 (KKKKVPAVPETL), 31–42 (KKKRRNFAELKV), 43–54 (KRLRKKFALKTL), and 55–66 (RKARRKLIYEKA). A 5 X 12 AA tandem repeats region spans residues 7 to 66 (KKKKVAAALGTLKKKKVPAVPETLKKKRRNFAELKVKRLRKKFALKTLRKARRKLIYEKA). At Thr-29 the chain carries Phosphothreonine. Residue Lys-136 is modified to N6-acetyllysine. An N6-succinyllysine modification is found at Lys-139. Residue Tyr-151 is modified to Phosphotyrosine.

The protein belongs to the universal ribosomal protein uL30 family. In terms of assembly, component of the large ribosomal subunit. Homodimer. Interacts with DHX33.

The protein resides in the cytoplasm. In terms of biological role, component of the large ribosomal subunit. The ribosome is a large ribonucleoprotein complex responsible for the synthesis of proteins in the cell. Binds to G-rich structures in 28S rRNA and in mRNAs. Plays a regulatory role in the translation apparatus; inhibits cell-free translation of mRNAs. This is Large ribosomal subunit protein uL30 (Rpl7) from Rattus norvegicus (Rat).